A 356-amino-acid polypeptide reads, in one-letter code: S-adenosylmethionine:tRNA ribosyltransferase-isomerase (356 aa).

The protein belongs to the QueA family. In terms of assembly, monomer.

Its subcellular location is the cytoplasm. The enzyme catalyses 7-aminomethyl-7-carbaguanosine(34) in tRNA + S-adenosyl-L-methionine = epoxyqueuosine(34) in tRNA + adenine + L-methionine + 2 H(+). It functions in the pathway tRNA modification; tRNA-queuosine biosynthesis. Transfers and isomerizes the ribose moiety from AdoMet to the 7-aminomethyl group of 7-deazaguanine (preQ1-tRNA) to give epoxyqueuosine (oQ-tRNA). This is S-adenosylmethionine:tRNA ribosyltransferase-isomerase from Serratia proteamaculans (strain 568).